We begin with the raw amino-acid sequence, 481 residues long: p-aminobenzoyl-glutamate hydrolase subunit B (481 aa).

In terms of assembly, forms a heterodimer with AbgA. Mn(2+) is required as a cofactor.

Component of the p-aminobenzoyl-glutamate hydrolase multicomponent enzyme system which catalyzes the cleavage of p-aminobenzoyl-glutamate (PABA-GLU) to form p-aminobenzoate (PABA) and glutamate. AbgAB does not degrade dipeptides and the physiological role of abgABT should be clarified. The protein is p-aminobenzoyl-glutamate hydrolase subunit B (abgB) of Escherichia coli (strain K12).